A 124-amino-acid chain; its full sequence is Modulator protein MzrA (124 aa).

Over 1 to 7 (MINRRMK) the chain is Cytoplasmic. The helical transmembrane segment at 8-28 (TGFVFHLLLLLLPLVVLVTSS) threads the bilayer. At 29–124 (RRTADDVTLH…KLSQQPFKLG (96 aa)) the chain is on the periplasmic side.

Belongs to the MzrA family. In terms of assembly, interacts with EnvZ.

It localises to the cell inner membrane. Its function is as follows. Modulates the activity of the EnvZ/OmpR two-component regulatory system, probably by directly modulating EnvZ enzymatic activity and increasing stability of phosphorylated OmpR. In Musicola paradisiaca (strain Ech703) (Dickeya paradisiaca), this protein is Modulator protein MzrA.